The chain runs to 394 residues: Elongation factor Tu 2 (394 aa).

Positions Lys10–Glu204 constitute a tr-type G domain. The tract at residues Gly19–Thr26 is G1. Gly19–Thr26 lines the GTP pocket. Thr26 provides a ligand contact to Mg(2+). Residues Gly60 to Asn64 are G2. The G3 stretch occupies residues Asp81–Gly84. GTP is bound by residues Asp81 to His85 and Asn136 to Asp139. Positions Asn136–Asp139 are G4. Positions Ser174–Leu176 are G5.

The protein belongs to the TRAFAC class translation factor GTPase superfamily. Classic translation factor GTPase family. EF-Tu/EF-1A subfamily. As to quaternary structure, monomer.

The protein localises to the cytoplasm. It carries out the reaction GTP + H2O = GDP + phosphate + H(+). Its function is as follows. GTP hydrolase that promotes the GTP-dependent binding of aminoacyl-tRNA to the A-site of ribosomes during protein biosynthesis. The polypeptide is Elongation factor Tu 2 (Shigella flexneri serotype 5b (strain 8401)).